Reading from the N-terminus, the 55-residue chain is Large ribosomal subunit protein bL33 (55 aa).

The segment covering Met-1–Leu-11 has biased composition (basic and acidic residues). The segment at Met-1 to Thr-29 is disordered. Positions Ser-14–Ser-24 are enriched in polar residues.

It belongs to the bacterial ribosomal protein bL33 family.

The chain is Large ribosomal subunit protein bL33 from Polynucleobacter asymbioticus (strain DSM 18221 / CIP 109841 / QLW-P1DMWA-1) (Polynucleobacter necessarius subsp. asymbioticus).